The following is a 957-amino-acid chain: Receptor-like protein 34 (957 aa).

Residues 1–31 (MKGSWVVSTSIIRITLSFTFLFICHFSDVLA) form the signal peptide. At 32–910 (APTRHLCRPE…EEEDEDLISW (879 aa)) the chain is on the extracellular side. N-linked (GlcNAc...) asparagine glycans are attached at residues N78, N101, N114, N143, N167, N191, and N215. LRR repeat units lie at residues 120 to 143 (LHFL…SIEN), 144 to 167 (LSHL…SIGN), 168 to 192 (LSRL…IGNL), 194 to 216 (HLTF…IGNL), 217 to 240 (SHLT…IGGL), 241 to 264 (SNLT…IGNL), 266 to 287 (QLIV…SFGN), 288 to 312 (LNQL…LLNL), 313 to 336 (TGLS…ITSL), 338 to 360 (NLMA…LFII), 361 to 384 (PSLT…NISS), 386 to 409 (SNLQ…ISKL), 412 to 434 (LQEL…IFSH), 435 to 459 (LKSL…ILPY), 460 to 483 (FKTL…SVSS), 487 to 510 (SQSI…LRTQ), 511 to 534 (HELG…LWTL), and 535 to 557 (PNLF…TKPE). N-linked (GlcNAc...) asparagine glycans are attached at residues N242 and N263. N-linked (GlcNAc...) asparagine glycosylation is found at N311 and N332. The N-linked (GlcNAc...) asparagine glycan is linked to N381. N477 carries N-linked (GlcNAc...) asparagine glycosylation. Residues N541, N544, N569, N593, N608, and N618 are each glycosylated (N-linked (GlcNAc...) asparagine). The stretch at 558-580 (PSMAYLLGSNNNFTGKIPSFICE) is one LRR 19; degenerate repeat. LRR repeat units follow at residues 581-605 (LRSL…MENL), 606-630 (KSNL…IFES), 632-652 (RSLD…LRFF), 653-675 (SNLE…WLSS), 677-698 (QKLQ…QALF), 699-722 (PKLR…YFVE), 765-789 (LTIY…IGLL), 790-813 (KELH…IGNL), 815-837 (ALES…IGNL), and 839-862 (LLSY…QFLT). N-linked (GlcNAc...) asparagine glycosylation is present at N712. N-linked (GlcNAc...) asparagine glycans are attached at residues N796, N812, N836, and N844. The helical transmembrane segment at 911–931 (IAAAIGFGPGIAFGLMFGYIL) threads the bilayer. Residues 932–957 (VSYKPEWFMNPFGRNNRRRKRHTTTH) lie on the Cytoplasmic side of the membrane.

It belongs to the RLP family.

It localises to the cell membrane. The sequence is that of Receptor-like protein 34 from Arabidopsis thaliana (Mouse-ear cress).